The following is a 142-amino-acid chain: Large ribosomal subunit protein bL17 (142 aa).

This sequence belongs to the bacterial ribosomal protein bL17 family. In terms of assembly, part of the 50S ribosomal subunit. Contacts protein L32.

The sequence is that of Large ribosomal subunit protein bL17 from Methylocella silvestris (strain DSM 15510 / CIP 108128 / LMG 27833 / NCIMB 13906 / BL2).